Consider the following 503-residue polypeptide: D-xylose-proton symporter-like 2 (503 aa).

The segment covering 1 to 15 (MALDPEQQQPISSVS) has biased composition (polar residues). The tract at residues 1-32 (MALDPEQQQPISSVSREFGKSSGEISPEREPL) is disordered. Alanine 2 carries the post-translational modification N-acetylalanine. Residue serine 26 is modified to Phosphoserine. 12 helical membrane passes run 42-62 (YSVV…LLYG), 99-119 (GSLY…DVIG), 124-144 (LILA…APTY), 146-166 (VLII…HAAP), 187-207 (FFIV…VNVH), 213-233 (MYAT…WLPA), 305-325 (ALII…PSVL), 346-366 (VSIL…VVID), 375-395 (LGGV…YLFF), 400-420 (VVAV…FGPI), 437-457 (GLSL…FAFS), and 467-487 (ILFC…FFIV).

Belongs to the major facilitator superfamily. Sugar transporter (TC 2.A.1.1) family.

It is found in the membrane. The chain is D-xylose-proton symporter-like 2 from Arabidopsis thaliana (Mouse-ear cress).